The sequence spans 110 residues: MFNFGNLAELMKQAQSIKENVEKAKEELKNEKIVVEVGGGMVKVVSDGLGTVLDLEIDKSLLNENEYPVLKDLLIAAINEVSERSKEVVADKISQATGLPMNMSKFGGMF.

It belongs to the YbaB/EbfC family. Homodimer.

It is found in the cytoplasm. The protein localises to the nucleoid. Functionally, binds to DNA and alters its conformation. May be involved in regulation of gene expression, nucleoid organization and DNA protection. In Sulfurihydrogenibium sp. (strain YO3AOP1), this protein is Nucleoid-associated protein SYO3AOP1_1366.